Consider the following 282-residue polypeptide: uncharacterized protein (282 aa).

The HTH rpiR-type domain occupies 2 to 78; it reads TDVLAVIREM…IKIAVSLAKQ (77 aa). The segment at residues 38–57 is a DNA-binding region (H-T-H motif); it reads VNELANACDTSEASIIRFCR. The SIS domain maps to 122 to 262; that stretch reads AAEALANANK…FILVAQKKYN (141 aa).

This is an uncharacterized protein from Caldanaerobacter subterraneus subsp. tengcongensis (strain DSM 15242 / JCM 11007 / NBRC 100824 / MB4) (Thermoanaerobacter tengcongensis).